Reading from the N-terminus, the 39-residue chain is Photosystem II reaction center protein L (39 aa).

Residues 18–38 (SLYLGLLFVFVTGVLMSSYFF) traverse the membrane as a helical segment.

The protein belongs to the PsbL family. As to quaternary structure, PSII is composed of 1 copy each of membrane proteins PsbA, PsbB, PsbC, PsbD, PsbE, PsbF, PsbH, PsbI, PsbJ, PsbK, PsbL, PsbM, PsbT, PsbX, PsbY, PsbZ, Psb30/Ycf12, peripheral proteins PsbO, CyanoQ (PsbQ), PsbU, PsbV and a large number of cofactors. It forms dimeric complexes.

The protein resides in the cellular thylakoid membrane. One of the components of the core complex of photosystem II (PSII). PSII is a light-driven water:plastoquinone oxidoreductase that uses light energy to abstract electrons from H(2)O, generating O(2) and a proton gradient subsequently used for ATP formation. It consists of a core antenna complex that captures photons, and an electron transfer chain that converts photonic excitation into a charge separation. This subunit is found at the monomer-monomer interface and is required for correct PSII assembly and/or dimerization. The chain is Photosystem II reaction center protein L from Parasynechococcus marenigrum (strain WH8102).